We begin with the raw amino-acid sequence, 872 residues long: Alanine--tRNA ligase (872 aa).

Zn(2+) is bound by residues His-571, His-575, Cys-674, and His-678.

This sequence belongs to the class-II aminoacyl-tRNA synthetase family. The cofactor is Zn(2+).

The protein localises to the cytoplasm. The catalysed reaction is tRNA(Ala) + L-alanine + ATP = L-alanyl-tRNA(Ala) + AMP + diphosphate. Catalyzes the attachment of alanine to tRNA(Ala) in a two-step reaction: alanine is first activated by ATP to form Ala-AMP and then transferred to the acceptor end of tRNA(Ala). Also edits incorrectly charged Ser-tRNA(Ala) and Gly-tRNA(Ala) via its editing domain. The protein is Alanine--tRNA ligase of Symbiobacterium thermophilum (strain DSM 24528 / JCM 14929 / IAM 14863 / T).